Here is a 309-residue protein sequence, read N- to C-terminus: Porphobilinogen deaminase (309 aa).

An S-(dipyrrolylmethanemethyl)cysteine modification is found at cysteine 242.

It belongs to the HMBS family. In terms of assembly, monomer. Dipyrromethane serves as cofactor.

The enzyme catalyses 4 porphobilinogen + H2O = hydroxymethylbilane + 4 NH4(+). Its pathway is porphyrin-containing compound metabolism; protoporphyrin-IX biosynthesis; coproporphyrinogen-III from 5-aminolevulinate: step 2/4. In terms of biological role, tetrapolymerization of the monopyrrole PBG into the hydroxymethylbilane pre-uroporphyrinogen in several discrete steps. This is Porphobilinogen deaminase from Legionella pneumophila (strain Lens).